The following is a 517-amino-acid chain: Crotonobetaine/carnitine--CoA ligase (517 aa).

It belongs to the ATP-dependent AMP-binding enzyme family.

The catalysed reaction is 4-(trimethylamino)butanoate + ATP + CoA = 4-(trimethylamino)butanoyl-CoA + AMP + diphosphate. It carries out the reaction crotonobetaine + ATP + CoA = crotonobetainyl-CoA + AMP + diphosphate. It catalyses the reaction (R)-carnitine + ATP + CoA = (R)-carnitinyl-CoA + AMP + diphosphate. Its pathway is amine and polyamine metabolism; carnitine metabolism. In terms of biological role, catalyzes the transfer of CoA to carnitine, generating the initial carnitinyl-CoA needed for the CaiB reaction cycle. Also has activity toward crotonobetaine and gamma-butyrobetaine. This is Crotonobetaine/carnitine--CoA ligase from Escherichia coli (strain K12 / MC4100 / BW2952).